The sequence spans 168 residues: Mitochondrial ATP-independent inner membrane protease subunit 1a (168 aa).

The transit peptide at 1–47 (MRMTFLSYLKQWRGTAKEAFENVSIVAKFLCLLHVTDRYIISTTHVH) directs the protein to the mitochondrion. Residues Ser50 and Lys94 contribute to the active site.

The protein belongs to the peptidase S26 family. IMP1 subfamily. As to quaternary structure, heterodimer of 2 subunits, IMP1A/B and IMP12.

The protein localises to the mitochondrion inner membrane. Catalyzes the removal of transit peptides required for the targeting of proteins from the mitochondrial matrix, across the inner membrane, into the inter-membrane space. The polypeptide is Mitochondrial ATP-independent inner membrane protease subunit 1a (Arabidopsis thaliana (Mouse-ear cress)).